A 406-amino-acid chain; its full sequence is Argininosuccinate synthase (406 aa).

Residue 9–17 (AYSGGLDTS) coordinates ATP. Tyrosine 86 lines the L-citrulline pocket. Position 116 (glycine 116) interacts with ATP. L-aspartate-binding residues include threonine 118, asparagine 122, and aspartate 123. Asparagine 122 lines the L-citrulline pocket. L-citrulline is bound by residues arginine 126, serine 174, serine 183, glutamate 259, and tyrosine 271.

Belongs to the argininosuccinate synthase family. Type 1 subfamily. As to quaternary structure, homotetramer.

It is found in the cytoplasm. The enzyme catalyses L-citrulline + L-aspartate + ATP = 2-(N(omega)-L-arginino)succinate + AMP + diphosphate + H(+). It participates in amino-acid biosynthesis; L-arginine biosynthesis; L-arginine from L-ornithine and carbamoyl phosphate: step 2/3. The protein is Argininosuccinate synthase of Geobacillus thermodenitrificans (strain NG80-2).